The following is a 105-amino-acid chain: Cell division protein FtsB (105 aa).

Residues Met1–Lys3 lie on the Cytoplasmic side of the membrane. The helical transmembrane segment at Leu4 to Leu21 threads the bilayer. The Periplasmic portion of the chain corresponds to Gly22–Gln105. Residues Asp28–Gly62 are a coiled coil.

This sequence belongs to the FtsB family. Part of a complex composed of FtsB, FtsL and FtsQ.

It is found in the cell inner membrane. In terms of biological role, essential cell division protein. May link together the upstream cell division proteins, which are predominantly cytoplasmic, with the downstream cell division proteins, which are predominantly periplasmic. This Sodalis glossinidius (strain morsitans) protein is Cell division protein FtsB.